Here is a 423-residue protein sequence, read N- to C-terminus: AP-1 complex subunit mu-2 (423 aa).

The MHD domain maps to 168 to 421 (KNEVFIDVIE…ITQSGDYQLR (254 aa)).

It belongs to the adaptor complexes medium subunit family. In terms of assembly, adaptor protein complex 1 (AP-1) is a heterotetramer composed of two large adaptins (gamma-type subunit AP1G1 and beta-type subunit AP1B1), a medium adaptin (mu-type subunit AP1M1 or AP1M2) and a small adaptin (sigma-type subunit AP1S1 or AP1S2 or AP1S3). Interacts with P2X4. In terms of processing, phosphorylation of membrane-bound AP1M1/AP1M2 increases its affinity for sorting signals.

The protein resides in the golgi apparatus. It is found in the cytoplasmic vesicle. It localises to the clathrin-coated vesicle membrane. Functionally, subunit of clathrin-associated adaptor protein complex 1 that plays a role in protein sorting in the trans-Golgi network (TGN) and endosomes. The AP complexes mediate the recruitment of clathrin to membranes and the recognition of sorting signals within the cytosolic tails of transmembrane cargo molecules. This chain is AP-1 complex subunit mu-2 (Ap1m2), found in Rattus norvegicus (Rat).